Reading from the N-terminus, the 93-residue chain is Small ribosomal subunit protein uS19 (93 aa).

Belongs to the universal ribosomal protein uS19 family.

Its function is as follows. Protein S19 forms a complex with S13 that binds strongly to the 16S ribosomal RNA. In Mycolicibacterium smegmatis (strain ATCC 700084 / mc(2)155) (Mycobacterium smegmatis), this protein is Small ribosomal subunit protein uS19.